The primary structure comprises 470 residues: Cysteine--tRNA ligase (470 aa).

Zn(2+) is bound at residue Cys-28. The 'HIGH' region signature appears at 30 to 40; the sequence is PTVYNYIHIGN. Residues Cys-212, His-237, and Glu-241 each contribute to the Zn(2+) site. The 'KMSKS' region signature appears at 271–275; the sequence is KMSKS. Position 274 (Lys-274) interacts with ATP.

This sequence belongs to the class-I aminoacyl-tRNA synthetase family. Monomer. It depends on Zn(2+) as a cofactor.

Its subcellular location is the cytoplasm. It carries out the reaction tRNA(Cys) + L-cysteine + ATP = L-cysteinyl-tRNA(Cys) + AMP + diphosphate. In Levilactobacillus brevis (strain ATCC 367 / BCRC 12310 / CIP 105137 / JCM 1170 / LMG 11437 / NCIMB 947 / NCTC 947) (Lactobacillus brevis), this protein is Cysteine--tRNA ligase.